Reading from the N-terminus, the 230-residue chain is Heptaprenylglyceryl phosphate synthase (230 aa).

Position 12 (K12) interacts with sn-glycerol 1-phosphate. Mg(2+) is bound by residues D14 and S40. Residues 159-164, G189, and 209-210 each bind sn-glycerol 1-phosphate; these read YLEYSG and GN.

Belongs to the GGGP/HepGP synthase family. Group I subfamily. In terms of assembly, homodimer. It depends on Mg(2+) as a cofactor.

It catalyses the reaction sn-glycerol 1-phosphate + all-trans-heptaprenyl diphosphate = 3-heptaprenyl-sn-glycero-1-phosphate + diphosphate. The protein operates within membrane lipid metabolism; glycerophospholipid metabolism. Functionally, prenyltransferase that catalyzes in vivo the transfer of the heptaprenyl moiety of heptaprenyl pyrophosphate (HepPP; 35 carbon atoms) to the C3 hydroxyl of sn-glycerol-1-phosphate (G1P), producing heptaprenylglyceryl phosphate (HepGP). This reaction is an ether-bond-formation step in the biosynthesis of archaea-type G1P-based membrane lipids found in Bacillales. The protein is Heptaprenylglyceryl phosphate synthase of Bacillus pumilus (strain SAFR-032).